We begin with the raw amino-acid sequence, 258 residues long: Thiazole synthase (258 aa).

Lysine 100 acts as the Schiff-base intermediate with DXP in catalysis. 1-deoxy-D-xylulose 5-phosphate is bound by residues glycine 161, 187 to 188 (AG), and 209 to 210 (NT).

Belongs to the ThiG family. Homotetramer. Forms heterodimers with either ThiH or ThiS.

Its subcellular location is the cytoplasm. It carries out the reaction [ThiS sulfur-carrier protein]-C-terminal-Gly-aminoethanethioate + 2-iminoacetate + 1-deoxy-D-xylulose 5-phosphate = [ThiS sulfur-carrier protein]-C-terminal Gly-Gly + 2-[(2R,5Z)-2-carboxy-4-methylthiazol-5(2H)-ylidene]ethyl phosphate + 2 H2O + H(+). It functions in the pathway cofactor biosynthesis; thiamine diphosphate biosynthesis. In terms of biological role, catalyzes the rearrangement of 1-deoxy-D-xylulose 5-phosphate (DXP) to produce the thiazole phosphate moiety of thiamine. Sulfur is provided by the thiocarboxylate moiety of the carrier protein ThiS. In vitro, sulfur can be provided by H(2)S. The protein is Thiazole synthase of Campylobacter jejuni subsp. jejuni serotype O:23/36 (strain 81-176).